Here is a 147-residue protein sequence, read N- to C-terminus: 3-dehydroquinate dehydratase (147 aa).

The active-site Proton acceptor is the Tyr-22. Substrate contacts are provided by Asn-73, His-79, and Asp-86. His-99 (proton donor) is an active-site residue. Residues 100-101 (LS) and Arg-110 contribute to the substrate site.

It belongs to the type-II 3-dehydroquinase family. Homododecamer.

It carries out the reaction 3-dehydroquinate = 3-dehydroshikimate + H2O. Its pathway is metabolic intermediate biosynthesis; chorismate biosynthesis; chorismate from D-erythrose 4-phosphate and phosphoenolpyruvate: step 3/7. Its function is as follows. Catalyzes a trans-dehydration via an enolate intermediate. The sequence is that of 3-dehydroquinate dehydratase from Synechococcus sp. (strain WH7803).